A 218-amino-acid chain; its full sequence is Protein-L-isoaspartate O-methyltransferase (218 aa).

Serine 63 is a catalytic residue.

Belongs to the methyltransferase superfamily. L-isoaspartyl/D-aspartyl protein methyltransferase family.

It localises to the cytoplasm. It catalyses the reaction [protein]-L-isoaspartate + S-adenosyl-L-methionine = [protein]-L-isoaspartate alpha-methyl ester + S-adenosyl-L-homocysteine. Its function is as follows. Catalyzes the methyl esterification of L-isoaspartyl residues in peptides and proteins that result from spontaneous decomposition of normal L-aspartyl and L-asparaginyl residues. It plays a role in the repair and/or degradation of damaged proteins. The polypeptide is Protein-L-isoaspartate O-methyltransferase (Syntrophus aciditrophicus (strain SB)).